The chain runs to 124 residues: uncharacterized protein (124 aa).

The next 3 membrane-spanning stretches (helical) occupy residues 13 to 33, 43 to 63, and 71 to 91; these read LIQIVGVIFALFALSRVVLQL, GLFWIFVWGFVVIFLVFPEFF, and GVGRGVDALIYISIVVLFYLI.

It to M.thermoautotrophicum MTH137.

It is found in the cell membrane. This is an uncharacterized protein from Methanocaldococcus jannaschii (strain ATCC 43067 / DSM 2661 / JAL-1 / JCM 10045 / NBRC 100440) (Methanococcus jannaschii).